A 144-amino-acid chain; its full sequence is Large ribosomal subunit protein uL15 (144 aa).

Over residues methionine 1–histidine 13 the composition is skewed to basic residues. Residues methionine 1 to asparagine 32 are disordered.

This sequence belongs to the universal ribosomal protein uL15 family. Part of the 50S ribosomal subunit.

Binds to the 23S rRNA. In Thermoplasma acidophilum (strain ATCC 25905 / DSM 1728 / JCM 9062 / NBRC 15155 / AMRC-C165), this protein is Large ribosomal subunit protein uL15.